We begin with the raw amino-acid sequence, 947 residues long: MNWNKGGSGNKRGFGFGGFAISTGKKEEPKLPQVSHSAFQSASSKYGSTSNQLPSFYKIGSKRANFDEENSYFDDEEEDSSNVDLPYIPAENSPTRQQLRSKTDSDSEEDPLEAFMAEVEDQAAKDMRKLEERDKEKANARGIRDDIEEEDDQEAYFRYMAENPTAGLVPEEEEDNLEYDSDGNPIAPTTKRIIDPLPPIDHTEIEYPPFEKNFYEEHEAITSQTPQQITELRHKLNLRVSGAAPPRLCSSFAHFGFDEQLLHQIRKSEYTQPTPIQCQGIPVALSGRDMIGIAKTGSGKTAAFIWPILVHIMDQKELQPADGPIAVIVCPTRELCQQIHSECKRFGKAYNLRSVAVYGGGSMWEQAKALQEGAEIVVCTPGRLIDHVKKKATNLQRVTYLVFDEADRMFDMGFEYQVRSIANHVRPDRQTLLFSATFRKKIEKLARDILVDPIRVVQGDIGEANEDITQVVEILPSGPEKWTWLTRRLVEFTSTGSVLVFVTKKANAEELAANLRQDDHPLGLLHGDMDQSERNKVISDFKKKSIPVLVATDVAARGLDIPSIKTVVNYDVARDIDTHTHRIGRTGRAGEKGVAYTLLTSKESNFAGDLVRNLEGANQYVSKELLDLAMQNSWFRKSRFKAGKGKKLNIGGGGLGYRERPGLGAESSEHGTGGNVMSNYEAFKPSGGAMGDRLSAMKSAFQSQYKNHFVAASASTQKTGTSSINSGAWTSAGSLSSVPSAHPPSGKLPAEAAPPPVHTAMLGFTSSGTLSSIPTGYPANISSASYPAATLFGARDGASAGTESGGRERHSDSKGRHGDSHRPSDREGYRHGDGHRHSSSSRHGERNGGEGRRESSRDGRRDSSRDGESRRDGSRDGGEGRRESSRDGEGRRESSRDGDGRRESSGDGRREVVGDDGDSRKEGTREAKTDTFAIPVPPKRKKSRWDS.

Residues 1 to 18 are compositionally biased toward gly residues; the sequence is MNWNKGGSGNKRGFGFGG. Disordered regions lie at residues 1 to 54, 68 to 114, and 176 to 200; these read MNWN…NQLP, EENS…PLEA, and NLEYDSDGNPIAPTTKRIIDPLPPI. A compositionally biased stretch (polar residues) spans 34 to 54; that stretch reads VSHSAFQSASSKYGSTSNQLP. Residues 68-81 show a composition bias toward acidic residues; the sequence is EENSYFDDEEEDSS. A coiled-coil region spans residues 112–152; the sequence is LEAFMAEVEDQAAKDMRKLEERDKEKANARGIRDDIEEEDD. The short motif at 250–278 is the Q motif element; the sequence is SSFAHFGFDEQLLHQIRKSEYTQPTPIQC. In terms of domain architecture, Helicase ATP-binding spans 281 to 456; that stretch reads IPVALSGRDM…RDILVDPIRV (176 aa). Residue 294 to 301 participates in ATP binding; it reads AKTGSGKT. The DEAD box motif lies at 404-407; that stretch reads DEAD. Positions 484 to 629 constitute a Helicase C-terminal domain; that stretch reads WLTRRLVEFT…YVSKELLDLA (146 aa). 2 disordered regions span residues 731–754 and 797–947; these read SAGSLSSVPSAHPPSGKLPAEAAP and GASA…RWDS. A compositionally biased stretch (basic and acidic residues) spans 805 to 929; it reads GGRERHSDSK…RKEGTREAKT (125 aa). Residues 938-947 are compositionally biased toward basic residues; it reads PKRKKSRWDS.

It belongs to the DEAD box helicase family. DDX42 subfamily. Transient component of the SF3B subcomplex of the 17S U2 SnRNP complex.

It localises to the cytoplasm. The protein resides in the nucleus. It carries out the reaction ATP + H2O = ADP + phosphate + H(+). Functionally, ATP-dependent RNA helicase that binds to partially double-stranded RNAs (dsRNAs) in order to unwind RNA secondary structures. Unwinding is promoted in the presence of single-strand binding proteins. Also mediates RNA duplex formation thereby displacing the single-strand RNA binding protein. ATP and ADP modulate its activity: ATP binding and hydrolysis by DDX42 triggers RNA strand separation, whereas the ADP-bound form of the protein triggers annealing of complementary RNA strands. Required for assembly of the 17S U2 SnRNP complex of the spliceosome, a large ribonucleoprotein complex that removes introns from transcribed pre-mRNAs: DDX42 associates transiently with the SF3B subcomplex of the 17S U2 SnRNP complex and is released after fulfilling its role in the assembly of 17S U2 SnRNP. The polypeptide is ATP-dependent RNA helicase DDX42 (ddx42) (Xenopus laevis (African clawed frog)).